The sequence spans 919 residues: UPF0182 protein Tery_4385 (919 aa).

The next 7 membrane-spanning stretches (helical) occupy residues 6–26, 52–72, 96–116, 160–180, 198–218, 243–263, and 268–288; these read YIII…RTLV, IFLW…NYWI, IFVK…AATA, WLFT…ALKG, THIS…FWFE, FAYW…VLSV, and IIWP…FNVL.

It belongs to the UPF0182 family.

The protein resides in the cell membrane. This Trichodesmium erythraeum (strain IMS101) protein is UPF0182 protein Tery_4385.